Here is a 467-residue protein sequence, read N- to C-terminus: E3 ubiquitin-protein ligase IE61 (467 aa).

Residues 19-58 form an RING-type zinc finger; it reads CTICMSTVSDLGKTMPCLHDFCFVCIRAWTSTSVQCPLCR. Disordered regions lie at residues 101–171, 205–238, 344–364, and 413–467; these read GDVI…GVTK, QQPR…FRAT, IVRP…RDTR, and DSAC…MKKS. A compositionally biased stretch (polar residues) spans 116 to 143; that stretch reads ESIQQPTSRSSREPIQSPNPGPLQSSAR. The segment covering 149–161 has biased composition (low complexity); it reads SPSDSQQDSIQPP. Residues 162–171 are compositionally biased toward polar residues; sequence TRDSSPGVTK. Positions 228–238 are enriched in basic and acidic residues; sequence RTMDRLPFRAT. 2 stretches are compositionally biased toward low complexity: residues 429 to 443 and 450 to 459; these read GESN…TSGS and KSSAGKAGKG.

Interacts with host BTRC; this interaction seems to inactivate SCF-mediated protein degradation in general. Post-translationally, auto-ubiquitinated.

It catalyses the reaction S-ubiquitinyl-[E2 ubiquitin-conjugating enzyme]-L-cysteine + [acceptor protein]-L-lysine = [E2 ubiquitin-conjugating enzyme]-L-cysteine + N(6)-ubiquitinyl-[acceptor protein]-L-lysine.. RING-finger E3 ubiquitin ligase that degrades host SP100, one of the major components of ND10 nuclear bodies, thereby disrupting the organization of these bodies. Also plays a role in the inhibition of host NF-kappa-B pathway by blocking the SCF(BTRC)-mediated addition of ubiquitin chains to host I-kappa-B-alpha/NFKBIA, thereby interfering with its degradation. The chain is E3 ubiquitin-protein ligase IE61 (61) from Varicella-zoster virus (strain Dumas) (HHV-3).